A 483-amino-acid polypeptide reads, in one-letter code: MFS-type transporter hepF (483 aa).

The interval 1–31 is disordered; that stretch reads METPAGKADRPRDHDSEQSQDNVVSWEGEDD. Positions 7–17 are enriched in basic and acidic residues; it reads KADRPRDHDSE. A run of 11 helical transmembrane segments spans residues 89 to 109, 124 to 144, 147 to 167, 179 to 199, 206 to 226, 276 to 296, 311 to 331, 357 to 377, 385 to 405, 416 to 436, and 448 to 468; these read TIVVSIFVLGLAFGPLLAAPI, ILYTIFTVACGVSTNISMLIV, FFAGVTGSAPLTIGGGTVADL, FVTLGQAVAPAIGPVAGGFLT, WVFWLLTIVNGTITICQILFT, PISLIVALCCAVIYGILYVLV, IGISGLGYLGLGIGNLVGLWI, PMMILSGPVIAAGLFWYGWSV, MPIVGSGIVGLGNMFFFMPMV, AASAIAANAVLRSIGGAVLPL, and GWGNSILAFMALVFNPLLIAI.

Belongs to the major facilitator superfamily.

The protein resides in the cell membrane. MFS-type transporter; part of the gene cluster that mediates the biosynthesis of heptelidic acid (HA), a sesquiterpene lactone that acts as an inhibitor of glyceraldehyde-3-phosphatedehydrogenase (GAPDH) and a growth inhibitor of the salt-tolerant lactic acid bacteria in soy sauce brewing. Might be required for efficient secretion of heptelidic acid. The polypeptide is MFS-type transporter hepF (hepF) (Aspergillus oryzae (strain ATCC 42149 / RIB 40) (Yellow koji mold)).